The sequence spans 149 residues: uncharacterized protein (149 aa).

Over residues Met-1–Gly-15 the composition is skewed to basic and acidic residues. Residues Met-1–Lys-32 are disordered.

This is an uncharacterized protein from Gallus gallus (Chicken).